The sequence spans 281 residues: Endochitinase At2g43610 (281 aa).

The signal sequence occupies residues Met1–Ser28. In terms of domain architecture, Chitin-binding type-1 spans Gln29–Ser66. 4 cysteine pairs are disulfide-bonded: Cys31-Cys42, Cys36-Cys48, Cys41-Cys55, and Cys59-Cys64. Residues Gly86 to Cys281 form a catalytic region. Residue Glu148 is the Proton donor of the active site. Asn278 carries N-linked (GlcNAc...) asparagine glycosylation.

Belongs to the glycosyl hydrolase 19 family. Chitinase class I subfamily.

The catalysed reaction is Random endo-hydrolysis of N-acetyl-beta-D-glucosaminide (1-&gt;4)-beta-linkages in chitin and chitodextrins.. The polypeptide is Endochitinase At2g43610 (Arabidopsis thaliana (Mouse-ear cress)).